The chain runs to 209 residues: Probable septum site-determining protein MinC (209 aa).

Belongs to the MinC family. Interacts with MinD and FtsZ.

In terms of biological role, cell division inhibitor that blocks the formation of polar Z ring septums. Rapidly oscillates between the poles of the cell to destabilize FtsZ filaments that have formed before they mature into polar Z rings. Prevents FtsZ polymerization. The protein is Probable septum site-determining protein MinC of Clostridium kluyveri (strain NBRC 12016).